A 59-amino-acid polypeptide reads, in one-letter code: Putative potassium channel toxin Ts24 (59 aa).

The first 22 residues, 1–22 (MKAFYGILIIFILISMIHLSQQ), serve as a signal peptide directing secretion. Intrachain disulfides connect Cys29–Cys50, Cys35–Cys55, and Cys39–Cys57.

Belongs to the short scorpion toxin superfamily. Potassium channel inhibitor family. Alpha-KTx 04 subfamily. In terms of tissue distribution, expressed by the venom gland.

It localises to the secreted. Potently blocks Kv1.1/KCNA1 (85%), Kv1.2/KCNA2 (91%), Kv1.3/KCNA3 (89%), Kv1.6/KCNA6 (94%), and Shaker (97%). The protein is Putative potassium channel toxin Ts24 of Tityus serrulatus (Brazilian scorpion).